We begin with the raw amino-acid sequence, 175 residues long: Early E1A protein (175 aa).

The tract at residues proline 40–leucine 48 is interaction with RB1 in competition with E2F1. Positions leucine 106–glutamate 110 match the LXCXE motif, interaction with host RB1 motif. A zinc finger spans residues cysteine 146 to cysteine 164.

The protein belongs to the adenoviridae E1A protein family. Interacts with host UBE2I; this interaction interferes with polySUMOylation. Interacts with host RB1; this interaction induces the aberrant dissociation of RB1-E2F1 complex thereby disrupting the activity of RB1 and activating E2F1-regulated genes. Interacts with host ATF7; the interaction enhances ATF7-mediated viral transactivation activity which requires the zinc binding domains of both proteins. Isoform early E1A 32 kDa protein and isoform early E1A 26 kDa protein interact (via N-terminus) with CUL1 and E3 ubiquitin ligase RBX1; these interactions inhibit RBX1-CUL1-dependent elongation reaction of ubiquitin chains and attenuate ubiquitination of SCF(FBXW7) target proteins. Interacts (via PXLXP motif) with host ZMYND11/BS69 (via MYND-type zinc finger); this interaction inhibits E1A mediated transactivation. Interacts with host EP300; this interaction stimulates the acetylation of RB1 by recruiting EP300 and RB1 into a multimeric-protein complex. Interacts with host CTBP1 and CTBP2; this interaction seems to potentiate viral replication. Interacts with host DCAF7. Interacts with host DYRK1A. Interacts with host KPNA4; this interaction allows E1A import into the host nucleus. Interacts with host EP400; this interaction stabilizes MYC. Interacts with host TBP protein; this interaction probably disrupts the TBP-TATA complex.

It is found in the host nucleus. In terms of biological role, plays a role in viral genome replication by driving entry of quiescent cells into the cell cycle. Stimulation of progression from G1 to S phase allows the virus to efficiently use the cellular DNA replicating machinery to achieve viral genome replication. E1A protein has both transforming and trans-activating activities. Induces the disassembly of the E2F1 transcription factor from RB1 by direct competition for the same binding site on RB1, with subsequent transcriptional activation of E2F1-regulated S-phase genes and of the E2 region of the adenoviral genome. Release of E2F1 leads to the ARF-mediated inhibition of MDM2 and causes TP53/p53 to accumulate because it is not targeted for degradation by MDM2-mediated ubiquitination anymore. This increase in TP53, in turn, would arrest the cell proliferation and direct its death but this effect is counteracted by the viral protein E1B-55K. Inactivation of the ability of RB1 to arrest the cell cycle is critical for cellular transformation, uncontrolled cellular growth and proliferation induced by viral infection. Interaction with RBX1 and CUL1 inhibits ubiquitination of the proteins targeted by SCF(FBXW7) ubiquitin ligase complex, and may be linked to unregulated host cell proliferation. The tumorigenesis-restraining activity of E1A may be related to the disruption of the host CtBP-CtIP complex through the CtBP binding motif. The chain is Early E1A protein from Canis lupus familiaris (Dog).